Reading from the N-terminus, the 148-residue chain is Small ribosomal subunit protein bS6 (148 aa).

Positions 96 to 148 (HEEGQSAMLTRRDDRRERDGDDRPRRREGGFDRGDRGDRGPRRPRDNEAGEGA) are disordered.

Belongs to the bacterial ribosomal protein bS6 family.

In terms of biological role, binds together with bS18 to 16S ribosomal RNA. This is Small ribosomal subunit protein bS6 from Brucella abortus biovar 1 (strain 9-941).